Here is a 380-residue protein sequence, read N- to C-terminus: All-trans-retinol dehydrogenase [NAD(+)] ADH4 (380 aa).

Cys-47 serves as a coordination point for Zn(2+). 48–49 (HT) serves as a coordination point for NAD(+). His-69, Cys-99, Cys-102, Cys-105, and Cys-113 together coordinate Zn(2+). Residue Ser-121 is modified to Phosphoserine. Cys-180 contacts Zn(2+). Residues 205–210 (GLGGVG), Asp-229, and Lys-234 contribute to the NAD(+) site. Position 278 is a phosphoserine (Ser-278). NAD(+)-binding positions include 298–300 (IGV), 323–325 (TFF), and Arg-375.

The protein belongs to the zinc-containing alcohol dehydrogenase family. Class-II subfamily. As to quaternary structure, homodimer. It depends on Zn(2+) as a cofactor.

It is found in the cytoplasm. The catalysed reaction is all-trans-retinol + NAD(+) = all-trans-retinal + NADH + H(+). It carries out the reaction 9-cis-retinol + NAD(+) = 9-cis-retinal + NADH + H(+). It catalyses the reaction 20-oxo-(5Z,8Z,11Z,14Z)-eicosatetraenoate + NAD(+) + H2O = (5Z,8Z,11Z,14Z)-eicosatetraenedioate + NADH + 2 H(+). The enzyme catalyses 20-hydroxy-(5Z,8Z,11Z,14Z)-eicosatetraenoate + NAD(+) = 20-oxo-(5Z,8Z,11Z,14Z)-eicosatetraenoate + NADH + H(+). The catalysed reaction is 1,4-benzoquinone + NADH + H(+) = hydroquinone + NAD(+). Its activity is regulated as follows. Oxydation of 20-HETE is inhibited by low concentrations of N-heptylformamide. Oxydation of 20-HETE is a decreased by 55-65% by either all-trans-retinol or all-trans-retinoic acid. Strongly inhibited by omega-hydroxy fatty acids. Its function is as follows. Catalyzes the NAD-dependent oxidation of either all-trans-retinol or 9-cis-retinol. Also oxidizes long chain omega-hydroxy fatty acids, such as 20-HETE, producing both the intermediate aldehyde, 20-oxoarachidonate and the end product, a dicarboxylic acid, (5Z,8Z,11Z,14Z)-eicosatetraenedioate. Also catalyzes the reduction of benzoquinones. The protein is All-trans-retinol dehydrogenase [NAD(+)] ADH4 of Homo sapiens (Human).